The sequence spans 216 residues: ATP-dependent Clp protease proteolytic subunit (216 aa).

Ser103 serves as the catalytic Nucleophile. His128 is an active-site residue. The disordered stretch occupies residues Arg197–Pro216.

This sequence belongs to the peptidase S14 family. As to quaternary structure, fourteen ClpP subunits assemble into 2 heptameric rings which stack back to back to give a disk-like structure with a central cavity, resembling the structure of eukaryotic proteasomes.

It is found in the cytoplasm. The catalysed reaction is Hydrolysis of proteins to small peptides in the presence of ATP and magnesium. alpha-casein is the usual test substrate. In the absence of ATP, only oligopeptides shorter than five residues are hydrolyzed (such as succinyl-Leu-Tyr-|-NHMec, and Leu-Tyr-Leu-|-Tyr-Trp, in which cleavage of the -Tyr-|-Leu- and -Tyr-|-Trp bonds also occurs).. Functionally, cleaves peptides in various proteins in a process that requires ATP hydrolysis. Has a chymotrypsin-like activity. Plays a major role in the degradation of misfolded proteins. This Sphingopyxis alaskensis (strain DSM 13593 / LMG 18877 / RB2256) (Sphingomonas alaskensis) protein is ATP-dependent Clp protease proteolytic subunit.